Reading from the N-terminus, the 205-residue chain is Probable GTP-binding protein EngB (205 aa).

The EngB-type G domain maps to 8–195; it reads RDAEVVLIGR…NEAVRHHLHE (188 aa). GTP contacts are provided by residues 16-23, 41-45, 60-63, 140-143, and 175-177; these read GRSNVGKS, GVTRS, DLPG, NKMD, and ISA. Mg(2+)-binding residues include Ser-23 and Thr-43.

It belongs to the TRAFAC class TrmE-Era-EngA-EngB-Septin-like GTPase superfamily. EngB GTPase family. Mg(2+) is required as a cofactor.

Its function is as follows. Necessary for normal cell division and for the maintenance of normal septation. This Haloarcula marismortui (strain ATCC 43049 / DSM 3752 / JCM 8966 / VKM B-1809) (Halobacterium marismortui) protein is Probable GTP-binding protein EngB.